The sequence spans 608 residues: Mitogen-activated protein kinase kinase kinase 1 (608 aa).

The span at 1 to 13 (MDRILARMKKSTG) shows a compositional bias: basic residues. The disordered stretch occupies residues 1-20 (MDRILARMKKSTGRRGGDKN). Residues 1–325 (MDRILARMKK…VSNTSPIYPD (325 aa)) form a regulatory region region. The residue at position 62 (Ser62) is a Phosphoserine. Residues 192–234 (MERTPTIVKSKGYLVPNNVVAVGVGVGGGIKGLRPPVLKPPPA) form a binding with MPK4 region. Disordered stretches follow at residues 228–247 (VLKP…GSSW) and 256–287 (SETV…EAEE). The span at 271–287 (DGCDEEEGKEEEAEAEE) shows a compositional bias: acidic residues. One can recognise a Protein kinase domain in the interval 333 to 587 (WQKGQLLGRG…AAELLNHPFV (255 aa)). ATP is bound by residues 339 to 347 (LGRGSFGSV) and Lys361. Catalysis depends on Asp456, which acts as the Proton acceptor. Ser603 bears the Phosphoserine mark.

The protein belongs to the protein kinase superfamily. STE Ser/Thr protein kinase family. MAP kinase kinase kinase subfamily. Interacts with MKK1, MMK2 and MPK4. May form a ternary complex composed of MEKK1 and MKK1/MKK2 and MPK4. Interacts with RACK1A, RACK1B and RACK1C. Binds to CRLK1. Phosphorylated by CRLK1 in response to cold.

The protein resides in the cell membrane. It localises to the endosome. It carries out the reaction L-seryl-[protein] + ATP = O-phospho-L-seryl-[protein] + ADP + H(+). The catalysed reaction is L-threonyl-[protein] + ATP = O-phospho-L-threonyl-[protein] + ADP + H(+). Activated by cold via CRLK1-mediated phosphorylation and leading to elevated kinase activity towards MKK2. Its function is as follows. The MEKK1, MKK1/MKK2 and MPK4 function in a signaling pathway that modulates the expression of genes responding to biotic and abiotic stresses and also plays an important role in pathogen defense by negatively regulating innate immunity. Involved in the innate immune MAP kinase signaling cascade (MEKK1, MKK4/MKK5 and MPK3/MPK6) downstream of bacterial flagellin receptor FLS2. May be involved in the cold and salinity stress-mediated MAP kinase signaling cascade (MEKK1, MKK1/MKK2 and MPK4/MPK6). Activates by phosphorylation the downstream MKK2, MKK4 and MKK5 in a calcium-dependent manner. The polypeptide is Mitogen-activated protein kinase kinase kinase 1 (MEKK1) (Arabidopsis thaliana (Mouse-ear cress)).